The sequence spans 278 residues: MQLLPHDTVEDILERVPVKSLLRFKSACKQWKLTIESQYFQAKQLICSAGGKDLNLVLVSEVPKRYHIYQLFHNSCDGLVCLFDYQTLNNIVYNPATRWHRRFPVSSTNTWRYINPSSPYRINTSSSRGHALYVDGSLYWLTGKKEIKVLALDLHTETFQVISKAPFAEADHRNIITRSLNNRLCLSVSKPLQQMIIWSFNSENKTWEQIYSIVNRSVTQSLPVAILEKNKLLCCPRSNSRQLMIYDIKTKSVDSVSIGTYRCGDSVFCYFESLISIL.

Residues 1–43 enclose the F-box domain; sequence MQLLPHDTVEDILERVPVKSLLRFKSACKQWKLTIESQYFQAK.

This is Probable F-box protein At1g14315 from Arabidopsis thaliana (Mouse-ear cress).